We begin with the raw amino-acid sequence, 468 residues long: Glutamyl-tRNA reductase (468 aa).

Substrate-binding positions include 49–52 (TCNR), serine 109, 114–116 (EQQ), and glutamine 120. Cysteine 50 acts as the Nucleophile in catalysis. Residue 189–194 (GAGAMG) coordinates NADP(+). The disordered stretch occupies residues 443–468 (VPSGFDAESRRGGGDMQSSPKRSPSN). Over residues 458–468 (MQSSPKRSPSN) the composition is skewed to polar residues.

It belongs to the glutamyl-tRNA reductase family. In terms of assembly, homodimer.

The enzyme catalyses (S)-4-amino-5-oxopentanoate + tRNA(Glu) + NADP(+) = L-glutamyl-tRNA(Glu) + NADPH + H(+). It participates in porphyrin-containing compound metabolism; protoporphyrin-IX biosynthesis; 5-aminolevulinate from L-glutamyl-tRNA(Glu): step 1/2. In terms of biological role, catalyzes the NADPH-dependent reduction of glutamyl-tRNA(Glu) to glutamate 1-semialdehyde (GSA). In Mycobacterium tuberculosis (strain ATCC 25177 / H37Ra), this protein is Glutamyl-tRNA reductase.